A 357-amino-acid polypeptide reads, in one-letter code: Quinolinate synthase (357 aa).

Positions 50 and 71 each coordinate iminosuccinate. Cysteine 116 contributes to the [4Fe-4S] cluster binding site. Iminosuccinate-binding positions include 142–144 and serine 159; that span reads YAN. Residue cysteine 203 participates in [4Fe-4S] cluster binding. Iminosuccinate contacts are provided by residues 229–231 and threonine 246; that span reads HPE. Residue cysteine 300 coordinates [4Fe-4S] cluster.

The protein belongs to the quinolinate synthase family. Type 1 subfamily. It depends on [4Fe-4S] cluster as a cofactor.

It is found in the cytoplasm. It carries out the reaction iminosuccinate + dihydroxyacetone phosphate = quinolinate + phosphate + 2 H2O + H(+). The protein operates within cofactor biosynthesis; NAD(+) biosynthesis; quinolinate from iminoaspartate: step 1/1. In terms of biological role, catalyzes the condensation of iminoaspartate with dihydroxyacetone phosphate to form quinolinate. The chain is Quinolinate synthase from Shewanella sp. (strain MR-4).